A 793-amino-acid polypeptide reads, in one-letter code: Signal transducer and activator of transcription 5A (793 aa).

A Phosphotyrosine modification is found at tyrosine 90. Serine 128 is modified (phosphoserine). The region spanning 589-686 is the SH2 domain; it reads WNDGAILGFV…EVFAKYYTPV (98 aa). Residues tyrosine 682 and tyrosine 694 each carry the phosphotyrosine modification. Serine 779 is modified (phosphoserine).

This sequence belongs to the transcription factor STAT family. As to quaternary structure, forms a homodimer or a heterodimer with a related family member. Interacts with NCOA1 and SOCS7. Binds NR3C1. Interacts with ERBB4. Interacts with EBF4. Interacts with CD69. In terms of processing, ISGylated. Tyrosine phosphorylated in response to KITLG/SCF, IL2, IL3, IL7, IL15, CSF2/GMCSF, GH1, PRL, EPO and THPO. Activated KIT promotes phosphorylation on tyrosine residues and subsequent translocation to the nucleus. Tyrosine phosphorylated in response to constitutively activated FGFR1, FGFR2, FGFR3 and FGFR4. Tyrosine phosphorylation is required for DNA-binding activity and dimerization. Serine phosphorylation is also required for maximal transcriptional activity. Tyrosine phosphorylated in response to signaling via activated FLT3; wild-type FLT3 results in much weaker phosphorylation than constitutively activated mutant FLT3. Alternatively, can be phosphorylated by JAK2 at Tyr-694. As to expression, in the virgin, found in most tissues except brain and muscle. During lactation, abundantly found in mammary tissue, as well as in other secretory organs such as salivary gland and seminal vesicle.

The protein resides in the cytoplasm. The protein localises to the nucleus. In terms of biological role, carries out a dual function: signal transduction and activation of transcription. Mediates cellular responses to the cytokine KITLG/SCF and other growth factors. May mediate cellular responses to activated FGFR1, FGFR2, FGFR3 and FGFR4. Binds to the GAS element and activates PRL-induced transcription. Regulates the expression of milk proteins during lactation. The chain is Signal transducer and activator of transcription 5A (Stat5a) from Mus musculus (Mouse).